A 338-amino-acid polypeptide reads, in one-letter code: Anthranilate phosphoribosyltransferase (338 aa).

Residues Gly78, 81–82 (GD), Ser86, 88–91 (NIST), 106–114 (KHGNRSITS), and Ser118 contribute to the 5-phospho-alpha-D-ribose 1-diphosphate site. Residue Gly78 coordinates anthranilate. Ser90 contacts Mg(2+). Asn109 contacts anthranilate. Anthranilate is bound at residue Arg163. Mg(2+) is bound by residues Asp222 and Glu223.

This sequence belongs to the anthranilate phosphoribosyltransferase family. Homodimer. Mg(2+) is required as a cofactor.

The enzyme catalyses N-(5-phospho-beta-D-ribosyl)anthranilate + diphosphate = 5-phospho-alpha-D-ribose 1-diphosphate + anthranilate. The protein operates within amino-acid biosynthesis; L-tryptophan biosynthesis; L-tryptophan from chorismate: step 2/5. Catalyzes the transfer of the phosphoribosyl group of 5-phosphorylribose-1-pyrophosphate (PRPP) to anthranilate to yield N-(5'-phosphoribosyl)-anthranilate (PRA). The chain is Anthranilate phosphoribosyltransferase from Staphylococcus haemolyticus (strain JCSC1435).